A 305-amino-acid polypeptide reads, in one-letter code: Protoheme IX farnesyltransferase (305 aa).

9 helical membrane passes run 31–51 (VMSLVMFTGFVGMWLAPYSVH), 52–72 (PFIAVIVLACISLGAGSAGAI), 102–119 (ALSFGLITGFFAVFFMAL), 123–145 (LLASFLLLFTIFYYICIYTIWLK), 151–171 (NIVIGGVSGALPPVIGYAAVS), 179–199 (IILFLIIFIWTPPHSWALALF), 218–238 (ILYTKEQILIYSILLFLVSLM), 240–260 (FFIGMNNFIYLIIAGMLGLVF), and 281–301 (FAYSIFYLFFIFLLLSSTSTI).

This sequence belongs to the UbiA prenyltransferase family. Protoheme IX farnesyltransferase subfamily.

It is found in the cell inner membrane. It carries out the reaction heme b + (2E,6E)-farnesyl diphosphate + H2O = Fe(II)-heme o + diphosphate. It participates in porphyrin-containing compound metabolism; heme O biosynthesis; heme O from protoheme: step 1/1. In terms of biological role, converts heme B (protoheme IX) to heme O by substitution of the vinyl group on carbon 2 of heme B porphyrin ring with a hydroxyethyl farnesyl side group. In Rickettsia akari (strain Hartford), this protein is Protoheme IX farnesyltransferase.